The following is a 189-amino-acid chain: Ras-like protein 1 (189 aa).

10–17 (GAGGVGKS) is a GTP binding site. Residues 32-40 (YDPTIEDSY) carry the Effector region motif. Residues 57–61 (DTAGQ) and 116–119 (NKCD) each bind GTP. C186 bears the Cysteine methyl ester mark. A lipid anchor (S-geranylgeranyl cysteine) is attached at C186. Residues 187–189 (KML) constitute a propeptide, removed in mature form.

This sequence belongs to the small GTPase superfamily. Ras family.

The protein resides in the cell membrane. It catalyses the reaction GTP + H2O = GDP + phosphate + H(+). Alternates between an inactive form bound to GDP and an active form bound to GTP. Activated by a guanine nucleotide-exchange factor (GEF) and inactivated by a GTPase-activating protein (GAP). Its function is as follows. Ras proteins bind GDP/GTP and possess intrinsic GTPase activity. Plays a role in eye development by regulating cell growth, survival of postmitotic ommatidial cells and differentiation of photoreceptor cells. During larval development, mediates Ptth/tor signaling leading to the production of ecdysone, a hormone required for the initiation of metamorphosis. This chain is Ras-like protein 1, found in Drosophila grimshawi (Hawaiian fruit fly).